We begin with the raw amino-acid sequence, 104 residues long: Photosystem II reaction center Psb28 protein (104 aa).

It belongs to the Psb28 family. As to quaternary structure, part of the photosystem II complex.

Its subcellular location is the cellular thylakoid membrane. The polypeptide is Photosystem II reaction center Psb28 protein (Synechococcus sp. (strain JA-3-3Ab) (Cyanobacteria bacterium Yellowstone A-Prime)).